Reading from the N-terminus, the 238-residue chain is MSGESISTFQFLGLTFNTTNLISGLVSALIVFCVVFALSRNLKLKPTGKQNILEWIVDFTNGILRDSVDEEEEKNFGLYAFTLFLFIFVSNQIGLFLQIAWNDVSYLRSPTADPIVTLTLSLITMMLAHYSGVAKFGFKKYFEKTYLSPFKVWLPIGVFTEFIDFLTLGLRIYGVIFAGEMLLKMIGGIAFSGGIVNMIVAIPLALIWQGFSVFLGSIQAFVFVTLTSVYISHKVEDE.

A run of 6 helical transmembrane segments spans residues 18–38, 76–96, 114–134, 150–170, 188–208, and 211–231; these read TTNL…VFAL, FGLY…IGLF, PIVT…SGVA, FKVW…TLGL, GIAF…ALIW, and FSVF…SVYI.

It belongs to the ATPase A chain family. As to quaternary structure, F-type ATPases have 2 components, CF(1) - the catalytic core - and CF(0) - the membrane proton channel. CF(1) has five subunits: alpha(3), beta(3), gamma(1), delta(1), epsilon(1). CF(0) has three main subunits: a(1), b(2) and c(9-12). The alpha and beta chains form an alternating ring which encloses part of the gamma chain. CF(1) is attached to CF(0) by a central stalk formed by the gamma and epsilon chains, while a peripheral stalk is formed by the delta and b chains.

The protein localises to the cell membrane. Functionally, key component of the proton channel; it plays a direct role in the translocation of protons across the membrane. The sequence is that of ATP synthase subunit a from Pediococcus pentosaceus (strain ATCC 25745 / CCUG 21536 / LMG 10740 / 183-1w).